A 609-amino-acid polypeptide reads, in one-letter code: UvrABC system protein C (609 aa).

Positions 19-97 (ASPGCYLWKS…IKKHNPRFNV (79 aa)) constitute a GIY-YIG domain. In terms of domain architecture, UVR spans 208–243 (ESLVSDLNIKMSNASERLDFEKAARYRDMLQRIQNF).

It belongs to the UvrC family. As to quaternary structure, interacts with UvrB in an incision complex.

Its subcellular location is the cytoplasm. Functionally, the UvrABC repair system catalyzes the recognition and processing of DNA lesions. UvrC both incises the 5' and 3' sides of the lesion. The N-terminal half is responsible for the 3' incision and the C-terminal half is responsible for the 5' incision. In Leptospira interrogans serogroup Icterohaemorrhagiae serovar Lai (strain 56601), this protein is UvrABC system protein C.